A 245-amino-acid chain; its full sequence is Ubiquinone/menaquinone biosynthesis C-methyltransferase UbiE (245 aa).

S-adenosyl-L-methionine-binding positions include Thr-71, Asp-92, and 118–119 (DA).

The protein belongs to the class I-like SAM-binding methyltransferase superfamily. MenG/UbiE family.

The enzyme catalyses a 2-demethylmenaquinol + S-adenosyl-L-methionine = a menaquinol + S-adenosyl-L-homocysteine + H(+). It carries out the reaction a 2-methoxy-6-(all-trans-polyprenyl)benzene-1,4-diol + S-adenosyl-L-methionine = a 5-methoxy-2-methyl-3-(all-trans-polyprenyl)benzene-1,4-diol + S-adenosyl-L-homocysteine + H(+). The protein operates within quinol/quinone metabolism; menaquinone biosynthesis; menaquinol from 1,4-dihydroxy-2-naphthoate: step 2/2. Its pathway is cofactor biosynthesis; ubiquinone biosynthesis. Methyltransferase required for the conversion of demethylmenaquinol (DMKH2) to menaquinol (MKH2) and the conversion of 2-polyprenyl-6-methoxy-1,4-benzoquinol (DDMQH2) to 2-polyprenyl-3-methyl-6-methoxy-1,4-benzoquinol (DMQH2). This chain is Ubiquinone/menaquinone biosynthesis C-methyltransferase UbiE, found in Neisseria meningitidis serogroup B (strain ATCC BAA-335 / MC58).